Consider the following 380-residue polypeptide: Apelin receptor (380 aa).

The Extracellular portion of the chain corresponds to 1–30 (MEEGGDFDNYYGADNQSECEYTDWKSSGAL). A glycan (N-linked (GlcNAc...) asparagine) is linked at Asn-15. Cystine bridges form between Cys-19/Cys-281 and Cys-102/Cys-181. A helical membrane pass occupies residues 31-54 (IPAIYMLVFLLGTTGNGLVLWTVF). The Cytoplasmic portion of the chain corresponds to 55-64 (RSSREKRRSA). Residues 65–86 (DIFIASLAVADLTFVVTLPLWA) traverse the membrane as a helical segment. Residues 87–99 (TYTYRDYDWPFGT) lie on the Extracellular side of the membrane. Residues 100–125 (FFCKLSSYLIFVNMYASVFCLTGLSF) traverse the membrane as a helical segment. Topologically, residues 126–146 (DRYLAIVRPVANARLRLRVSG) are cytoplasmic. The helical transmembrane segment at 147–164 (AVATAVLWVLAALLAMPV) threads the bilayer. Over 165 to 198 (MVLRTTGDLENTTKVQCYMDYSMVATVSSEWAWE) the chain is Extracellular. The N-linked (GlcNAc...) asparagine glycan is linked to Asn-175. Residues 199-223 (VGLGVSSTTVGFVVPFTIMLTCYFF) form a helical membrane-spanning segment. Residues 224–246 (IAQTIAGHFRKERIEGLRKRRRL) lie on the Cytoplasmic side of the membrane. The helical transmembrane segment at 247 to 270 (LSIIVVLVVTFALCWMPYHLVKTL) threads the bilayer. Residues 271-289 (YMLGSLLHWPCDFDLFLMN) are Extracellular-facing. The helical transmembrane segment at 290-312 (IFPYCTCISYVNSCLNPFLYAFF) threads the bilayer. The Cytoplasmic segment spans residues 313-380 (DPRFRQACTS…PYSQETLVVD (68 aa)). Residues 342-351 (KSASYSSGHS) show a composition bias toward low complexity. Residues 342 to 380 (KSASYSSGHSQGPGPNMGKGGEQMHEKSIPYSQETLVVD) are disordered. The segment covering 371 to 380 (PYSQETLVVD) has biased composition (polar residues).

This sequence belongs to the G-protein coupled receptor 1 family. In terms of assembly, homodimer; dimerization inhibits APLNR-mediated G protein and beta-arrestin signaling pathways compared to monomeric APLNR. Expressed in heart, brain, kidney, stomach, spleen, thymus, lung, ovary, small intestine and colon, adipose tissues and pancreas. Expressed in glial cells, astrocytes and neuronal subpopulations. Expressed in embryonic (ESCs) and induced (iPSCs) pluripotent stem cells.

The protein localises to the cell membrane. Its function is as follows. G protein-coupled receptor for peptide hormones apelin (APLN) and apelin receptor early endogenous ligand (APELA/ELA), that plays a role in the regulation of normal cardiovascular function and fluid homeostasis. When acting as apelin receptor, activates both G(i) protein pathway that inhibits adenylate cyclase activity, and the beta-arrestin pathway that promotes internalization of the receptor. APLNR/APJ also functions as mechanoreceptor that is activated by pathological stimuli in a G-protein-independent fashion to induce beta-arrestin signaling, hence eliciting cardiac hypertrophy. However, the presence of apelin ligand blunts cardiac hypertrophic induction from APLNR/APJ on response to pathological stimuli. Plays a key role in early development such as gastrulation, blood vessels formation and heart morphogenesis by acting as a APELA receptor. May promote angioblast migration toward the embryonic midline, i.e. the position of the future vessel formation, during vasculogenesis. Promotes sinus venosus (SV)-derived endothelial cells migration into the developing heart to promote coronary blood vessel development. Also plays a role in various processes in adults such as regulation of blood vessel formation, blood pressure, heart contractility and heart failure. (Microbial infection) Alternative coreceptor with CD4 for HIV-1 infection; may be involved in the development of AIDS dementia. The protein is Apelin receptor of Homo sapiens (Human).